The primary structure comprises 464 residues: ATP synthase subunit beta (464 aa).

An ATP-binding site is contributed by 154–161; sequence GGAGVGKT.

This sequence belongs to the ATPase alpha/beta chains family. In terms of assembly, F-type ATPases have 2 components, CF(1) - the catalytic core - and CF(0) - the membrane proton channel. CF(1) has five subunits: alpha(3), beta(3), gamma(1), delta(1), epsilon(1). CF(0) has three main subunits: a(1), b(2) and c(9-12). The alpha and beta chains form an alternating ring which encloses part of the gamma chain. CF(1) is attached to CF(0) by a central stalk formed by the gamma and epsilon chains, while a peripheral stalk is formed by the delta and b chains.

It is found in the cell inner membrane. It carries out the reaction ATP + H2O + 4 H(+)(in) = ADP + phosphate + 5 H(+)(out). Produces ATP from ADP in the presence of a proton gradient across the membrane. The catalytic sites are hosted primarily by the beta subunits. This is ATP synthase subunit beta from Blochmanniella floridana.